Consider the following 57-residue polypeptide: UPF0391 membrane protein RPE_2138 (57 aa).

2 helical membrane-spanning segments follow: residues 4-24 (WVVT…GGIA) and 30-50 (IAKI…VIGL).

It belongs to the UPF0391 family.

It is found in the cell membrane. In Rhodopseudomonas palustris (strain BisA53), this protein is UPF0391 membrane protein RPE_2138.